The following is a 340-amino-acid chain: NADH-quinone oxidoreductase subunit H (340 aa).

The next 9 helical transmembrane spans lie at 3-23 (LVGM…LVYM), 69-89 (WAFF…WAVI), 102-122 (VVVM…VLAI), 127-147 (VYGI…LGAI), 154-174 (ISYE…AGSL), 186-206 (MPYW…VSML), 248-268 (ILVS…PLNI), 274-294 (IPGF…FIWV), and 312-332 (KVFL…LLWV).

Belongs to the complex I subunit 1 family. In terms of assembly, NDH-1 is composed of 14 different subunits. Subunits NuoA, H, J, K, L, M, N constitute the membrane sector of the complex.

The protein localises to the cell inner membrane. It catalyses the reaction a quinone + NADH + 5 H(+)(in) = a quinol + NAD(+) + 4 H(+)(out). Functionally, NDH-1 shuttles electrons from NADH, via FMN and iron-sulfur (Fe-S) centers, to quinones in the respiratory chain. The immediate electron acceptor for the enzyme in this species is believed to be ubiquinone. Couples the redox reaction to proton translocation (for every two electrons transferred, four hydrogen ions are translocated across the cytoplasmic membrane), and thus conserves the redox energy in a proton gradient. This subunit may bind ubiquinone. This chain is NADH-quinone oxidoreductase subunit H, found in Anaplasma phagocytophilum (strain HZ).